Here is a 454-residue protein sequence, read N- to C-terminus: uncharacterized protein (454 aa).

Residues 364 to 405 (CSRPGCDAPAYHSEVHHVTPWTTTHRTDINDLTLACGPDNRL) form the HNH domain. The disordered stretch occupies residues 415-434 (NAKGDTEWLPPAHLDHGQPR).

It belongs to the Rv1128c/1148c/1588c/1702c/1945/3466 family.

This is an uncharacterized protein from Mycobacterium tuberculosis (strain CDC 1551 / Oshkosh).